The primary structure comprises 100 residues: Large ribosomal subunit protein bL28 (100 aa).

It belongs to the bacterial ribosomal protein bL28 family.

The chain is Large ribosomal subunit protein bL28 from Gluconobacter oxydans (strain 621H) (Gluconobacter suboxydans).